A 476-amino-acid polypeptide reads, in one-letter code: Aspartyl/glutamyl-tRNA(Asn/Gln) amidotransferase subunit B (476 aa).

This sequence belongs to the GatB/GatE family. GatB subfamily. In terms of assembly, heterotrimer of A, B and C subunits.

The enzyme catalyses L-glutamyl-tRNA(Gln) + L-glutamine + ATP + H2O = L-glutaminyl-tRNA(Gln) + L-glutamate + ADP + phosphate + H(+). It catalyses the reaction L-aspartyl-tRNA(Asn) + L-glutamine + ATP + H2O = L-asparaginyl-tRNA(Asn) + L-glutamate + ADP + phosphate + 2 H(+). Functionally, allows the formation of correctly charged Asn-tRNA(Asn) or Gln-tRNA(Gln) through the transamidation of misacylated Asp-tRNA(Asn) or Glu-tRNA(Gln) in organisms which lack either or both of asparaginyl-tRNA or glutaminyl-tRNA synthetases. The reaction takes place in the presence of glutamine and ATP through an activated phospho-Asp-tRNA(Asn) or phospho-Glu-tRNA(Gln). The chain is Aspartyl/glutamyl-tRNA(Asn/Gln) amidotransferase subunit B from Thermosipho melanesiensis (strain DSM 12029 / CIP 104789 / BI429).